The sequence spans 441 residues: Ribulose bisphosphate carboxylase large chain (441 aa).

Lysine 4 is subject to N6,N6,N6-trimethyllysine. Positions 113 and 163 each coordinate substrate. The Proton acceptor role is filled by lysine 165. Lysine 167 lines the substrate pocket. Lysine 191, aspartate 193, and glutamate 194 together coordinate Mg(2+). N6-carboxylysine is present on lysine 191. The active-site Proton acceptor is histidine 284. Residues arginine 285, histidine 317, and serine 369 each contribute to the substrate site.

Belongs to the RuBisCO large chain family. Type I subfamily. In terms of assembly, heterohexadecamer of 8 large chains and 8 small chains; disulfide-linked. The disulfide link is formed within the large subunit homodimers. Mg(2+) is required as a cofactor. Post-translationally, the disulfide bond which can form in the large chain dimeric partners within the hexadecamer appears to be associated with oxidative stress and protein turnover.

It localises to the plastid. The protein localises to the chloroplast. It catalyses the reaction 2 (2R)-3-phosphoglycerate + 2 H(+) = D-ribulose 1,5-bisphosphate + CO2 + H2O. The catalysed reaction is D-ribulose 1,5-bisphosphate + O2 = 2-phosphoglycolate + (2R)-3-phosphoglycerate + 2 H(+). In terms of biological role, ruBisCO catalyzes two reactions: the carboxylation of D-ribulose 1,5-bisphosphate, the primary event in carbon dioxide fixation, as well as the oxidative fragmentation of the pentose substrate in the photorespiration process. Both reactions occur simultaneously and in competition at the same active site. The sequence is that of Ribulose bisphosphate carboxylase large chain from Darlingtonia californica (California pitcher plant).